A 528-amino-acid polypeptide reads, in one-letter code: Glycerol kinase 5 (528 aa).

ATP is bound by residues Ser-28 and Ser-29. Glycerol-binding residues include Arg-98, Asp-275, and Gln-276. The ATP site is built by Thr-297, Gly-340, and Gly-440.

The protein belongs to the FGGY kinase family.

The protein localises to the cytoplasm. It catalyses the reaction glycerol + ATP = sn-glycerol 3-phosphate + ADP + H(+). Its pathway is polyol metabolism; glycerol degradation via glycerol kinase pathway; sn-glycerol 3-phosphate from glycerol: step 1/1. Skin-specific kinase that plays a key role in glycerol metabolism, catalyzing its phosphorylation to produce sn-glycerol 3-phosphate. Involved in skin-specific regulation of sterol regulatory element-binding protein (SREBP) processing and lipid biosynthesis. In Bos taurus (Bovine), this protein is Glycerol kinase 5 (GK5).